We begin with the raw amino-acid sequence, 892 residues long: DNA ligase (892 aa).

The segment at 1–23 (MTMTNRDDSEQLAWDFDAPESDG) is disordered. NAD(+)-binding positions include 99 to 103 (DAAYD), 148 to 149 (SL), and Glu182. Catalysis depends on Lys184, which acts as the N6-AMP-lysine intermediate. NAD(+) is bound by residues Arg205, Glu244, Lys369, and Lys393. Positions 490, 493, 509, and 515 each coordinate Zn(2+). A BRCT domain is found at 810 to 892 (GLPQTLAGKT…KQLLDTGTVE (83 aa)).

This sequence belongs to the NAD-dependent DNA ligase family. LigA subfamily. Mg(2+) is required as a cofactor. The cofactor is Mn(2+).

The catalysed reaction is NAD(+) + (deoxyribonucleotide)n-3'-hydroxyl + 5'-phospho-(deoxyribonucleotide)m = (deoxyribonucleotide)n+m + AMP + beta-nicotinamide D-nucleotide.. Functionally, DNA ligase that catalyzes the formation of phosphodiester linkages between 5'-phosphoryl and 3'-hydroxyl groups in double-stranded DNA using NAD as a coenzyme and as the energy source for the reaction. It is essential for DNA replication and repair of damaged DNA. This Bifidobacterium adolescentis (strain ATCC 15703 / DSM 20083 / NCTC 11814 / E194a) protein is DNA ligase.